Consider the following 68-residue polypeptide: DNA-directed RNA polymerase subunit omega (68 aa).

It belongs to the RNA polymerase subunit omega family. As to quaternary structure, the RNAP catalytic core consists of 2 alpha, 1 beta, 1 beta' and 1 omega subunit. When a sigma factor is associated with the core the holoenzyme is formed, which can initiate transcription.

The enzyme catalyses RNA(n) + a ribonucleoside 5'-triphosphate = RNA(n+1) + diphosphate. Its function is as follows. Promotes RNA polymerase assembly. Latches the N- and C-terminal regions of the beta' subunit thereby facilitating its interaction with the beta and alpha subunits. The sequence is that of DNA-directed RNA polymerase subunit omega from Desulfatibacillum aliphaticivorans.